We begin with the raw amino-acid sequence, 376 residues long: MHEKFTFTLKSTSGGARLGEVAMPRGVIRTPAFMPVGTVGTVKAMYLDQVRELGADIILGNTYHLMLRPGPERVARLGGLHELIRWPHPILTDSGGFQVMSLSGLRKLDEKGVTFKSHVDGSLHHMSPERSIEIQGMLDSDIQMQLDECIALPAERKEIERAMEMSLRWAERCRVAFGEQPGKAMFGIVQGGDQPDLRIRSAEGLKELDLKGYAVGGLAVGEPQDVMLGMLDITLPVLPTEKPRYLMGVGTPDDILKSVARGIDMFDCVMPTRSGRHGLAFTRRGRVNIRNARHAEDMRPLDEQSNCPASRDYSRAYLHHLTRSNEALGGMLLSWHNLAYYQELMQGIRTSIEEGRFADFYAETIEMWARGDIDPV.

The active-site Proton acceptor is D93. Residues 93–97 (DSGGF), D147, Q190, and G217 each bind substrate. The interval 248-254 (GVGTPDD) is RNA binding. D267 acts as the Nucleophile in catalysis. Residues 272–276 (TRSGR) are RNA binding; important for wobble base 34 recognition.

Belongs to the queuine tRNA-ribosyltransferase family. In terms of assembly, homodimer. Within each dimer, one monomer is responsible for RNA recognition and catalysis, while the other monomer binds to the replacement base PreQ1.

The enzyme catalyses 7-aminomethyl-7-carbaguanine + guanosine(34) in tRNA = 7-aminomethyl-7-carbaguanosine(34) in tRNA + guanine. It functions in the pathway tRNA modification; tRNA-queuosine biosynthesis. In terms of biological role, catalyzes the base-exchange of a guanine (G) residue with the queuine precursor 7-aminomethyl-7-deazaguanine (PreQ1) at position 34 (anticodon wobble position) in tRNAs with GU(N) anticodons (tRNA-Asp, -Asn, -His and -Tyr). Catalysis occurs through a double-displacement mechanism. The nucleophile active site attacks the C1' of nucleotide 34 to detach the guanine base from the RNA, forming a covalent enzyme-RNA intermediate. The proton acceptor active site deprotonates the incoming PreQ1, allowing a nucleophilic attack on the C1' of the ribose to form the product. After dissociation, two additional enzymatic reactions on the tRNA convert PreQ1 to queuine (Q), resulting in the hypermodified nucleoside queuosine (7-(((4,5-cis-dihydroxy-2-cyclopenten-1-yl)amino)methyl)-7-deazaguanosine). This Agrobacterium fabrum (strain C58 / ATCC 33970) (Agrobacterium tumefaciens (strain C58)) protein is Queuine tRNA-ribosyltransferase.